Here is a 156-residue protein sequence, read N- to C-terminus: Sensor histidine kinase component HK2 (156 aa).

Over 1–42 (MALVLAAAGAVTVVQFRDAAHEADPDGALRGLTDDITADLVR) the chain is Extracellular. Residues 43–63 (ELVTILPIVLVIAAVAAYLLS) traverse the membrane as a helical segment. The HAMP domain maps to 64 to 120 (RAALRPVDRIRAAAQTLTTTPHPDTDAPLPVPPTDDEIAWLATTLNTMLTRLQRALA). The Cytoplasmic segment spans residues 64–156 (RAALRPVDRI…RCAGPDPPTS (93 aa)). The Histidine kinase; first part domain occupies 128–156 (DASHELRTPLALLTTELELRCAGPDPPTS). Residue histidine 131 is modified to Phosphohistidine; by autocatalysis.

As to quaternary structure, homodimer. Each monomer interacts with HK1 and the receiver domain of TcrA. Phosphorylated by HK1.

The protein resides in the cell membrane. It carries out the reaction ATP + protein L-histidine = ADP + protein N-phospho-L-histidine.. Functionally, member of the three-protein two-component system HK1/HK2/TcrA. HK2 transfers its phosphoryl group to TcrA. This chain is Sensor histidine kinase component HK2, found in Mycobacterium tuberculosis (strain ATCC 25618 / H37Rv).